A 508-amino-acid polypeptide reads, in one-letter code: Photosystem II CP47 reaction center protein (508 aa).

A run of 6 helical transmembrane segments spans residues 21–36, 101–115, 140–156, 203–218, 237–252, and 457–472; these read AVHIMHTALVAGWAGS, IVFSGLCFLAAIWHW, GIHLFLSGVACFGFGAF, IAAGTLGILAGLFHLS, VLSSSIAAVFFAAFVV, and SFALLFFFGHIWHGAR.

Belongs to the PsbB/PsbC family. PsbB subfamily. As to quaternary structure, PSII is composed of 1 copy each of membrane proteins PsbA, PsbB, PsbC, PsbD, PsbE, PsbF, PsbH, PsbI, PsbJ, PsbK, PsbL, PsbM, PsbT, PsbX, PsbY, PsbZ, Psb30/Ycf12, at least 3 peripheral proteins of the oxygen-evolving complex and a large number of cofactors. It forms dimeric complexes. Interacts with PAM68. Interacts with HHL1. Requires Binds multiple chlorophylls. PSII binds additional chlorophylls, carotenoids and specific lipids. as cofactor.

It is found in the plastid. It localises to the chloroplast thylakoid membrane. Its function is as follows. One of the components of the core complex of photosystem II (PSII). It binds chlorophyll and helps catalyze the primary light-induced photochemical processes of PSII. PSII is a light-driven water:plastoquinone oxidoreductase, using light energy to abstract electrons from H(2)O, generating O(2) and a proton gradient subsequently used for ATP formation. This chain is Photosystem II CP47 reaction center protein, found in Arabidopsis thaliana (Mouse-ear cress).